Here is a 153-residue protein sequence, read N- to C-terminus: Small ribosomal subunit protein uS5c (153 aa).

Residues Trp11 to Ile74 enclose the S5 DRBM domain.

This sequence belongs to the universal ribosomal protein uS5 family. In terms of assembly, part of the 30S ribosomal subunit. Contacts protein S4.

The protein localises to the plastid. It is found in the chloroplast. Its function is as follows. With S4 and S12 plays an important role in translational accuracy. The protein is Small ribosomal subunit protein uS5c (rps5) of Cyanidioschyzon merolae (strain NIES-3377 / 10D) (Unicellular red alga).